Reading from the N-terminus, the 332-residue chain is UPF0194 membrane protein YbhG (332 aa).

The first 16 residues, 1–16 (MMKKPVVIGLAVVVLA), serve as a signal peptide directing secretion. Residues 108-211 (EEIAQAAAAV…LQDSTLVAPS (104 aa)) are a coiled coil.

This sequence belongs to the UPF0194 family.

The protein localises to the periplasm. This is UPF0194 membrane protein YbhG from Escherichia coli O6:H1 (strain CFT073 / ATCC 700928 / UPEC).